A 99-amino-acid chain; its full sequence is Ubiquitin-related modifier 1 (99 aa).

At G99 the chain carries 1-thioglycine. Residue G99 forms a Glycyl lysine isopeptide (Gly-Lys) (interchain with K-? in acceptor proteins) linkage.

It belongs to the URM1 family. As to quaternary structure, homodimer; homodimerization may provide an autoprotection to the highly active C-terminal residue before attacking its substrates. Interacts with NCS2 and NCS6. Forms a conjugate with the target protein AHP1. In terms of processing, C-terminal thiocarboxylation occurs in 2 steps, it is first acyl-adenylated (-COAMP) via the hesA/moeB/thiF part of UBA4, then thiocarboxylated (-COSH) via the rhodanese domain of UBA4.

It localises to the cytoplasm. The protein localises to the nucleus. It functions in the pathway tRNA modification; 5-methoxycarbonylmethyl-2-thiouridine-tRNA biosynthesis. Acts as a sulfur carrier required for 2-thiolation of mcm(5)S(2)U at tRNA wobble positions of cytosolic tRNA(Lys), tRNA(Glu) and tRNA(Gln). Serves as sulfur donor in tRNA 2-thiolation reaction by being thiocarboxylated (-COSH) at its C-terminus by the MOCS3 homolog UBA4. The sulfur is then transferred to tRNA to form 2-thiolation of mcm(5)S(2)U. Prior mcm(5) tRNA modification by the elongator complex is required for 2-thiolation. Also acts as a ubiquitin-like protein (UBL) that is covalently conjugated via an isopeptide bond to lysine residues of target proteins such as AHP1. The thiocarboxylated form serves as substrate for conjugation and oxidative stress specifically induces the formation of UBL-protein conjugates. This is Ubiquitin-related modifier 1 from Saccharomyces cerevisiae (strain RM11-1a) (Baker's yeast).